A 431-amino-acid chain; its full sequence is Mannan endo-1,4-beta-mannosidase 5 (431 aa).

The N-terminal stretch at 1–24 (MVPTRNRPMLRILGFFICAAFIYL) is a signal peptide. Residue Asn45 is glycosylated (N-linked (GlcNAc...) asparagine). Trp97 contributes to the substrate binding site. A glycan (N-linked (GlcNAc...) asparagine) is linked at Asn168. Position 213 (Asn213) interacts with substrate. Glu214 acts as the Proton donor in catalysis. N-linked (GlcNAc...) asparagine glycosylation is present at Asn282. Tyr294 contacts substrate. The N-linked (GlcNAc...) asparagine glycan is linked to Asn301. Glu334 acts as the Nucleophile in catalysis. Residue Trp376 coordinates substrate.

Belongs to the glycosyl hydrolase 5 (cellulase A) family. Expressed in stems.

The protein localises to the secreted. The enzyme catalyses Random hydrolysis of (1-&gt;4)-beta-D-mannosidic linkages in mannans, galactomannans and glucomannans.. The polypeptide is Mannan endo-1,4-beta-mannosidase 5 (MAN5) (Arabidopsis thaliana (Mouse-ear cress)).